The following is a 174-amino-acid chain: Secretion monitor (174 aa).

The signal sequence occupies residues 1–35; the sequence is MGILNLWRQFGRRYFWSHLLLGVVAASIGAPTILA.

It belongs to the SecM family.

It localises to the cytoplasm. The protein localises to the cytosol. The protein resides in the periplasm. Functionally, regulates secA expression by translational coupling of the secM secA operon. Translational pausing at a specific Pro residue 5 residues before the end of the protein may allow disruption of a mRNA repressor helix that normally suppresses secA translation initiation. The protein is Secretion monitor of Photorhabdus laumondii subsp. laumondii (strain DSM 15139 / CIP 105565 / TT01) (Photorhabdus luminescens subsp. laumondii).